The chain runs to 529 residues: MPIFNLHQLRNFLFIIATTLFLSACQIESKPTSELDQIKQRGVLRVGTLNNQLSYYIGPDGQTGLDYELARQFADELGVKLEVKVAFRQAELFPMLKRGDIDLIATGLNQTPRAIKQFRPGPSYYYVSQVVVYKNGALRPRNLKQLVEYQNAKTASEDEAEASNNAAANTLQVVKQSQNVTLLKSLQSDYPELQFTTVSDADNYDLLRRVSTGELRFAISDSIELSLAQRLYPDLATAFEVTEDQPVSWFVRRSPDESLYALMIEFFGNISQSGELARLEEKYIGHIGSFDYVDTRAFIRALDNKLPKWAPLFEQYSAEFDWRLIAALAYQESHWNPLAKSPTGVRGMMMLTLPTAQSVGVKNRLDPEQSIRGGVEYLRRIVARVPESIPQHEKIWFALASYNVGFGHMMDARRLTKRQGGDPDSWGDVKERLPLLRQKKYFSQTRYGYARGDEAKNYVENIRRYYQSIIGHVGQNSLIASDQEGEIQVIPPLENSELVAASDIDAAENEALSPDVGVSQATLTTEVQP.

A signal peptide spans M1–I27. A non-LT domain region spans residues E28 to I287. Residues G288–P529 form an LT domain region. E332 is a catalytic residue. A disordered region spans residues E510 to P529. Over residues S519–P529 the composition is skewed to polar residues.

In the N-terminal section; belongs to the bacterial solute-binding protein 3 family. It in the C-terminal section; belongs to the transglycosylase Slt family.

The protein resides in the cell outer membrane. The catalysed reaction is Exolytic cleavage of the (1-&gt;4)-beta-glycosidic linkage between N-acetylmuramic acid (MurNAc) and N-acetylglucosamine (GlcNAc) residues in peptidoglycan, from either the reducing or the non-reducing ends of the peptidoglycan chains, with concomitant formation of a 1,6-anhydrobond in the MurNAc residue.. Functionally, murein-degrading enzyme that degrades murein glycan strands and insoluble, high-molecular weight murein sacculi, with the concomitant formation of a 1,6-anhydromuramoyl product. Lytic transglycosylases (LTs) play an integral role in the metabolism of the peptidoglycan (PG) sacculus. Their lytic action creates space within the PG sacculus to allow for its expansion as well as for the insertion of various structures such as secretion systems and flagella. In Vibrio vulnificus (strain CMCP6), this protein is Membrane-bound lytic murein transglycosylase F.